The sequence spans 337 residues: Anthranilate phosphoribosyltransferase (337 aa).

5-phospho-alpha-D-ribose 1-diphosphate contacts are provided by residues Gly-79, 82–83 (GD), Thr-87, 89–92 (NVST), 107–115 (KHGNRSVSS), and Ser-119. Residue Gly-79 coordinates anthranilate. A Mg(2+)-binding site is contributed by Ser-91. Residue Asn-110 participates in anthranilate binding. Residue Arg-165 coordinates anthranilate. Residues Asp-223 and Glu-224 each coordinate Mg(2+).

This sequence belongs to the anthranilate phosphoribosyltransferase family. As to quaternary structure, homodimer. Mg(2+) is required as a cofactor.

It carries out the reaction N-(5-phospho-beta-D-ribosyl)anthranilate + diphosphate = 5-phospho-alpha-D-ribose 1-diphosphate + anthranilate. The protein operates within amino-acid biosynthesis; L-tryptophan biosynthesis; L-tryptophan from chorismate: step 2/5. Catalyzes the transfer of the phosphoribosyl group of 5-phosphorylribose-1-pyrophosphate (PRPP) to anthranilate to yield N-(5'-phosphoribosyl)-anthranilate (PRA). This Aeromonas salmonicida (strain A449) protein is Anthranilate phosphoribosyltransferase.